The sequence spans 594 residues: Metastasis-associated protein MTA3 (594 aa).

Positions 1–147 (MAANMYRVGD…PSLKTLLADK (147 aa)) constitute a BAH domain. The ELM2 domain maps to 148 to 259 (GEIRVGPRYQ…SAISVLVPLG (112 aa)). Residues 266–318 (DEMEEWSASEASLFEEALEKYGKDFNDIRQDFLPWKSLTSIIEYYYMWKTTDR) form the SANT domain. A GATA-type; atypical zinc finger spans residues 379–406 (CESCYATQSHQWYSWGPPNMQCRLCAIC). S428 and S430 each carry phosphoserine. Residue T455 is modified to Phosphothreonine. Phosphoserine is present on S519.

It belongs to the metastasis-associated protein family. As to quaternary structure, component of the nucleosome remodeling and deacetylase (NuRD) repressor complex, composed of core proteins MTA1, MTA2, MTA3, RBBP4, RBBP7, HDAC1, HDAC2, MBD2, MBD3, and peripherally associated proteins CDK2AP1, CDK2AP2, GATAD2A, GATAD2B, CHD3, CHD4 and CHD5. The exact stoichiometry of the NuRD complex is unknown, and some subunits such as MBD2 and MBD3, GATAD2A and GATAD2B, and CHD3, CHD4 and CHD5 define mutually exclusive NuRD complexes. Interacts with BCL6. Interacts with NACC2. Interacts with PWWP2B. As to expression, expressed in germinal centers of lymphoid tissues. No expression in nonepithelial cells.

The protein localises to the nucleus. Its subcellular location is the cytoplasm. In terms of biological role, acts as a component of the histone deacetylase NuRD complex which participates in the remodeling of chromatin. Plays a role in maintenance of the normal epithelial architecture through the repression of SNAI1 transcription in a histone deacetylase-dependent manner, and thus the regulation of E-cadherin levels. Contributes to transcriptional repression by BCL6. The sequence is that of Metastasis-associated protein MTA3 (MTA3) from Homo sapiens (Human).